Consider the following 249-residue polypeptide: Probable transcriptional regulatory protein ZMO0153 (249 aa).

The protein belongs to the TACO1 family.

It localises to the cytoplasm. This Zymomonas mobilis subsp. mobilis (strain ATCC 31821 / ZM4 / CP4) protein is Probable transcriptional regulatory protein ZMO0153.